The following is a 340-amino-acid chain: HTH-type transcriptional regulator PtxS (340 aa).

The HTH lacI-type domain maps to 12-67 (VTISEVAQAAGVSKATVSRYIGGDRQLLADATAQRIEAVIEQLGYRPNRMASALKR). Residues 14-33 (ISEVAQAAGVSKATVSRYIG) constitute a DNA-binding region (H-T-H motif).

As to quaternary structure, homodimer.

Its activity is regulated as follows. 2-ketogluconate acts as a molecular effector and causes dissociation of PtxS from its target promoter. Glucose negatively affects the molecular binding of PtxS and 2KGA, and gluconic acid inhibits the PtxS-2KGA binding reaction. Functionally, involved in the regulation of 2-ketogluconic acid metabolism via the control of the expression of the kgu operon. Binds directly to a 14-bp palindrome sequence via its conserved HTH motif. This is HTH-type transcriptional regulator PtxS from Pseudomonas plecoglossicida.